Here is a 473-residue protein sequence, read N- to C-terminus: Glycogen synthase (473 aa).

ADP-alpha-D-glucose is bound at residue Lys15.

It belongs to the glycosyltransferase 1 family. Bacterial/plant glycogen synthase subfamily.

It carries out the reaction [(1-&gt;4)-alpha-D-glucosyl](n) + ADP-alpha-D-glucose = [(1-&gt;4)-alpha-D-glucosyl](n+1) + ADP + H(+). The protein operates within glycan biosynthesis; glycogen biosynthesis. Its function is as follows. Synthesizes alpha-1,4-glucan chains using ADP-glucose. The polypeptide is Glycogen synthase (Flavobacterium johnsoniae (strain ATCC 17061 / DSM 2064 / JCM 8514 / BCRC 14874 / CCUG 350202 / NBRC 14942 / NCIMB 11054 / UW101) (Cytophaga johnsonae)).